Here is a 523-residue protein sequence, read N- to C-terminus: Putative L-type lectin-domain containing receptor kinase V.6 (523 aa).

The signal sequence occupies residues 1-27 (MFSEVKVLQIVLVQWLTLFSFTYNSHG). The interval 28–242 (TYILDGSAVF…TGSIRALHYM (215 aa)) is legume-lectin like. The Extracellular segment spans residues 28–279 (TYILDGSAVF…KPSDRLRTVL (252 aa)). Asparagine 47, asparagine 59, asparagine 112, and asparagine 171 each carry an N-linked (GlcNAc...) asparagine glycan. Residues 280–300 (AVCLTLALFAVFLASGIGFVF) traverse the membrane as a helical segment. The Cytoplasmic portion of the chain corresponds to 301–523 (YLRHKKVKEV…TGRAVRVKFF (223 aa)). Residues 335–523 (FKEKQLLGKG…TGRAVRVKFF (189 aa)) form the Protein kinase domain. ATP contacts are provided by residues 341-349 (LGKGGFGQV) and lysine 364. Catalysis depends on aspartate 464, which acts as the Proton acceptor.

The protein in the C-terminal section; belongs to the protein kinase superfamily. Ser/Thr protein kinase family. This sequence in the N-terminal section; belongs to the leguminous lectin family.

It localises to the cell membrane. The catalysed reaction is L-seryl-[protein] + ATP = O-phospho-L-seryl-[protein] + ADP + H(+). It carries out the reaction L-threonyl-[protein] + ATP = O-phospho-L-threonyl-[protein] + ADP + H(+). The sequence is that of Putative L-type lectin-domain containing receptor kinase V.6 (LECRK56) from Arabidopsis thaliana (Mouse-ear cress).